The sequence spans 81 residues: Photosystem I iron-sulfur center (81 aa).

4Fe-4S ferredoxin-type domains follow at residues 2-31 (SHIVKIYDTCIGCTQCVRACPLDVLEMVPW) and 39-68 (MASAPRTEDCVGCKRCESACPTDFLSVRVY). C11, C14, C17, C21, C48, C51, C54, and C58 together coordinate [4Fe-4S] cluster.

In terms of assembly, the eukaryotic PSI reaction center is composed of at least 11 subunits. [4Fe-4S] cluster serves as cofactor.

It is found in the plastid. It localises to the chloroplast thylakoid membrane. The enzyme catalyses reduced [plastocyanin] + hnu + oxidized [2Fe-2S]-[ferredoxin] = oxidized [plastocyanin] + reduced [2Fe-2S]-[ferredoxin]. Apoprotein for the two 4Fe-4S centers FA and FB of photosystem I (PSI); essential for photochemical activity. FB is the terminal electron acceptor of PSI, donating electrons to ferredoxin. The C-terminus interacts with PsaA/B/D and helps assemble the protein into the PSI complex. Required for binding of PsaD and PsaE to PSI. PSI is a plastocyanin/cytochrome c6-ferredoxin oxidoreductase, converting photonic excitation into a charge separation, which transfers an electron from the donor P700 chlorophyll pair to the spectroscopically characterized acceptors A0, A1, FX, FA and FB in turn. This chain is Photosystem I iron-sulfur center, found in Stigeoclonium helveticum (Green alga).